Consider the following 511-residue polypeptide: 2'-acyl-2-O-sulfo-trehalose (hydroxy)phthioceranyltransferase PapA1 (511 aa).

This sequence belongs to the PapA acyltransferase family.

It catalyses the reaction a (hydroxy)phthioceranyl-[(hydroxy)phthioceranic acid synthase] + 2'-palmitoyl/stearoyl-2-O-sulfo-alpha,alpha-trehalose = a 3'-(hydroxy)phthioceranyl-2'-palmitoyl/stearoyl-2-O-sulfo-alpha,alpha-trehalose + holo-[(hydroxy)phthioceranic acid synthase].. Its function is as follows. Catalyzes the acylation of trehalose-2-sulfate-2'-palmitate (SL659) by adding the (hydroxy)phthioceranoyl group at the 3'-position to yield the diacylated intermediate 2-palmitoyl-3-(C43)-phthioceranyl-alpha, alpha'-D-trehalose-2'-sulfate (SL1278). The polypeptide is 2'-acyl-2-O-sulfo-trehalose (hydroxy)phthioceranyltransferase PapA1 (papA1) (Mycobacterium bovis (strain BCG / Pasteur 1173P2)).